Consider the following 542-residue polypeptide: Chaperonin GroEL (542 aa).

Residues 29–32, 86–90, Gly-413, 476–478, and Asp-492 each bind ATP; these read TLGP, DGTTT, and NAA. The segment at 523 to 542 is disordered; it reads EPAAPAMPGGMDPSMMGGMM. Residues 526–542 show a composition bias toward low complexity; it reads APAMPGGMDPSMMGGMM.

It belongs to the chaperonin (HSP60) family. Forms a cylinder of 14 subunits composed of two heptameric rings stacked back-to-back. Interacts with the co-chaperonin GroES.

The protein resides in the cytoplasm. It carries out the reaction ATP + H2O + a folded polypeptide = ADP + phosphate + an unfolded polypeptide.. In terms of biological role, together with its co-chaperonin GroES, plays an essential role in assisting protein folding. The GroEL-GroES system forms a nano-cage that allows encapsulation of the non-native substrate proteins and provides a physical environment optimized to promote and accelerate protein folding. The sequence is that of Chaperonin GroEL from Streptococcus uberis (strain ATCC BAA-854 / 0140J).